The following is a 215-amino-acid chain: Large ribosomal subunit protein uL4 (215 aa).

Residues 43–97 form a disordered region; sequence RRQGTHSTKTRAEVSGGGKKPWRQKGTGRARAGSTRSPIWVGGGKTHTPKPRDYS.

This sequence belongs to the universal ribosomal protein uL4 family. As to quaternary structure, part of the 50S ribosomal subunit.

Functionally, one of the primary rRNA binding proteins, this protein initially binds near the 5'-end of the 23S rRNA. It is important during the early stages of 50S assembly. It makes multiple contacts with different domains of the 23S rRNA in the assembled 50S subunit and ribosome. Forms part of the polypeptide exit tunnel. This chain is Large ribosomal subunit protein uL4, found in Brachyspira pilosicoli (Serpulina pilosicoli).